A 293-amino-acid chain; its full sequence is D-alanine--D-alanine ligase (293 aa).

Residues 98-291 (KIIWEQHSLT…FNKLVTSIIN (194 aa)) enclose the ATP-grasp domain. 124–177 (NFPLPWAVKPTLEGSSIGISKVDNQMQLNDALMLAWQYAPYALIEQWIKGDEYT) is an ATP binding site. Positions 245, 258, and 260 each coordinate Mg(2+).

Belongs to the D-alanine--D-alanine ligase family. It depends on Mg(2+) as a cofactor. Mn(2+) is required as a cofactor.

Its subcellular location is the cytoplasm. The enzyme catalyses 2 D-alanine + ATP = D-alanyl-D-alanine + ADP + phosphate + H(+). The protein operates within cell wall biogenesis; peptidoglycan biosynthesis. Functionally, cell wall formation. This chain is D-alanine--D-alanine ligase, found in Vesicomyosocius okutanii subsp. Calyptogena okutanii (strain HA).